The sequence spans 257 residues: Global transcriptional regulator CodY (257 aa).

The interval 1–155 (MSLLSKTREL…AATVLGMEIL (155 aa)) is GAF domain. A DNA-binding region (H-T-H motif) is located at residues 203-222 (ASKVADRVGITRSVIVNALR).

This sequence belongs to the CodY family.

It is found in the cytoplasm. Functionally, DNA-binding global transcriptional regulator which is involved in the adaptive response to starvation and acts by directly or indirectly controlling the expression of numerous genes in response to nutrient availability. During rapid exponential growth, CodY is highly active and represses genes whose products allow adaptation to nutrient depletion. This Staphylococcus carnosus (strain TM300) protein is Global transcriptional regulator CodY.